The chain runs to 237 residues: DNA repair protein RecO (237 aa).

It belongs to the RecO family.

Its function is as follows. Involved in DNA repair and RecF pathway recombination. The chain is DNA repair protein RecO from Rickettsia conorii (strain ATCC VR-613 / Malish 7).